Here is a 93-residue protein sequence, read N- to C-terminus: MKFAVILLFSLVVLAVASESVEEVRREIDIEDLPEQQRGCADLRQPCTEGDDCSCCGSEGVCNCSHPHKKGCYCKTAGPLEKLAKKFKGCKNK.

Positions 1–18 are cleaved as a signal peptide; sequence MKFAVILLFSLVVLAVAS. The propeptide occupies 19–38; the sequence is ESVEEVRREIDIEDLPEQQR.

This sequence belongs to the neurotoxin 31 family. In terms of processing, contains 5 disulfide bonds. In terms of tissue distribution, expressed by the venom gland.

It localises to the secreted. The sequence is that of U12-lycotoxin-Ls1a from Lycosa singoriensis (Wolf spider).